A 114-amino-acid chain; its full sequence is PDZK1-interacting protein 1 (114 aa).

Topologically, residues 1–28 (MSAFGLLILGLLTAVPPASCRQGLGNLQ) are extracellular. A helical membrane pass occupies residues 29–51 (PWMQGLIAVAVFLVLVAIAFAVN). The Cytoplasmic portion of the chain corresponds to 52–114 (HFWCQEEPEP…EEGKVRSTPM (63 aa)). Serine 85 carries the phosphoserine modification. Residues 95–114 (HENAYENVPEEEGKVRSTPM) are disordered. Residues 105–114 (EEGKVRSTPM) are compositionally biased toward basic and acidic residues.

This sequence belongs to the PDZK1-interacting protein 1/SMIM24 family. Forms a heterodimer (via N-terminal transmembrane helix) with SLC5A2/SGLT2 (via TM13); this interaction enhances SLC5A2 transporter activity. Interacts with PDZK1.

The protein localises to the apical cell membrane. Its function is as follows. Auxiliary protein of electrogenic Na(+)-coupled sugar symporter SLC5A2/SGLT2 and SLC5A1/SGLT1. Essential for the transporter activity of SLC5A2/SGLT2 but not SLC5A1/SGLT1. The polypeptide is PDZK1-interacting protein 1 (Pongo abelii (Sumatran orangutan)).